The chain runs to 301 residues: uncharacterized protein (301 aa).

This is an uncharacterized protein from Escherichia coli (strain K12).